Reading from the N-terminus, the 466-residue chain is Argininosuccinate lyase 1 (466 aa).

The protein belongs to the lyase 1 family. Argininosuccinate lyase subfamily.

It is found in the cytoplasm. It carries out the reaction 2-(N(omega)-L-arginino)succinate = fumarate + L-arginine. It participates in amino-acid biosynthesis; L-arginine biosynthesis; L-arginine from L-ornithine and carbamoyl phosphate: step 3/3. In Agrobacterium fabrum (strain C58 / ATCC 33970) (Agrobacterium tumefaciens (strain C58)), this protein is Argininosuccinate lyase 1.